Reading from the N-terminus, the 721-residue chain is Choline O-acetyltransferase (721 aa).

The Proton acceptor role is filled by histidine 419. Residues 496-508, serine 534, and glutamine 656 each bind CoA; that span reads GKTF…VSPD.

It belongs to the carnitine/choline acetyltransferase family. The 54 kDa and 13 kDa chains exist as a heterodimer. The N-terminus of choline O-acetyltransferase 67 kDa and 54 kDa chains are blocked.

The enzyme catalyses choline + acetyl-CoA = acetylcholine + CoA. Functionally, catalyzes the reversible synthesis of acetylcholine (ACh) from acetyl CoA and choline at cholinergic synapses. This Drosophila melanogaster (Fruit fly) protein is Choline O-acetyltransferase.